The chain runs to 303 residues: Probable 5-dehydro-4-deoxyglucarate dehydratase (303 aa).

The protein belongs to the DapA family.

It catalyses the reaction 5-dehydro-4-deoxy-D-glucarate + H(+) = 2,5-dioxopentanoate + CO2 + H2O. Its pathway is carbohydrate acid metabolism; D-glucarate degradation; 2,5-dioxopentanoate from D-glucarate: step 2/2. This Polaromonas naphthalenivorans (strain CJ2) protein is Probable 5-dehydro-4-deoxyglucarate dehydratase.